We begin with the raw amino-acid sequence, 622 residues long: FERM domain-containing protein 6 (622 aa).

In terms of domain architecture, FERM spans 16-328; that stretch reads RSVCIFLPND…NSHRLYMNLQ (313 aa). Residues 364-445 form a disordered region; it reads KRSRASGSSA…SGVESGGKDR (82 aa). Low complexity-rich tracts occupy residues 384 to 395 and 425 to 438; these read HSTASHSSSHTS and SSMTSHGSSHTSGV. Position 522 is a phosphoserine (Ser522). Position 523 is a phosphothreonine (Thr523). 3 positions are modified to phosphoserine: Ser525, Ser542, and Ser544.

It localises to the cytoplasm. The protein resides in the cell membrane. The polypeptide is FERM domain-containing protein 6 (FRMD6) (Homo sapiens (Human)).